Reading from the N-terminus, the 332-residue chain is D-2-hydroxyacid dehydrogenase (NAD(+)) (332 aa).

Active-site residues include arginine 237 and glutamate 266. The Proton donor role is filled by histidine 298.

This sequence belongs to the D-isomer specific 2-hydroxyacid dehydrogenase family. In terms of assembly, monomer.

It carries out the reaction a (2R)-2-hydroxycarboxylate + NAD(+) = a 2-oxocarboxylate + NADH + H(+). The enzyme catalyses (2R)-hydroxy-4-methylpentanoate + NAD(+) = 4-methyl-2-oxopentanoate + NADH + H(+). The protein operates within amino-acid degradation; L-leucine degradation. Functionally, involved in the reductive branch of L-leucine fermentation. Catalyzes the NADH-dependent reduction of 4-methyl-2-oxopentanoate (2-oxoisocaproate) to (R)-2-hydroxy-4-methylpentanoate ((R)-2-hydroxyisocaproate). For the reverse reaction, the enzyme accepts (R)- but not (S)-2-hydroxy-4-methylpentanoate. Can also use 2-oxopentanoate, 2-oxohexanoate and phenylpyruvate but not 2-oxoisovalerate and 2-oxobutyrate. Cannot use NADPH. This chain is D-2-hydroxyacid dehydrogenase (NAD(+)), found in Clostridioides difficile (Peptoclostridium difficile).